A 141-amino-acid chain; its full sequence is Decarboxylase CPUR_05434 (141 aa).

An EthD domain is found at 26–121 (EGMSEEAYRN…MHDHEMFADT (96 aa)).

Belongs to the tpcK family.

The enzyme catalyses atrochrysone carboxylate + H(+) = atrochrysone + CO2. Decarboxylase; part of the ergochrome gene cluster responsible for the typical purple-black color of the ergot sclerotia. The ergochrome gene cluster produces several ergot pigments including the yellow ergochrome secalonic acid and its derivatives, as well as the red anthraquinones endocrocin and clavorubin. The pathway begins with the synthesis of atrochrysone thioester by the polyketide synthase (PKS) CPUR_05437. The atrochrysone carboxyl ACP thioesterase CPUR_05436 then breaks the thioester bond and releases the atrochrysone carboxylic acid from CPUR_05437. The decarboxylase CPUR_05434 then catalyzes the concerted decarboxylation-elimination required to convert atochrysone carboxylic acid into emodin anthrone, which is further oxidized to emodin by the anthrone oxygenase CPUR_05435. Emodin is further modified to yield monodictyphenone via several steps involving CPUR_05427, CPUR_05428, CPUR_05429 and CPUR_05430. The short chain dehydrogenase/reductase CPUR_05418 then catalyzes the C-5 ketoreduction to give the xanthone skeleton of the monomeric units. Ergochromes formation requires further dimerization steps of different xanthone units, probably catalyzed by the cytochrome P450 monooxygenase CPUR_05419. CPUR_05425, CPUR_05426 and CPUR_05431 are unique to Claviceps, thus it is likely that they are involved in further modification of xanthone units or in their dimerization. The yellow ergochromes and the red anthraquinone pigments endocrocin and clavorubin are products from the same PKS derived precursors and the latter are likely shunt products in the pathway of xanthone biosynthesis. It is proposed that atrochrysone carboxylic acid released from the PKS CPUR_05437 can also be converted to endocrocin anthrone which is further oxidized into endocrocin by CPUR_05435. Endocrocin could be then modified to clavorubin, possibly by CPUR_05423 and CPUR_05431. Clavorubin is the principal anthraquinone metabolite produced by the cluster with a much higher yield compared to endocrocin. The sequence is that of Decarboxylase CPUR_05434 from Claviceps purpurea (strain 20.1) (Ergot fungus).